Reading from the N-terminus, the 165-residue chain is Protein C2-DOMAIN ABA-RELATED 8 (165 aa).

At Met-1 the chain carries N-acetylmethionine. Residues 1-106 (MENLVGLLRI…QGTDIQELTN (106 aa)) form the C2 domain. Ca(2+)-binding residues include Arg-21, Asp-22, Asp-27, Asp-73, Lys-74, Asp-75, and Asp-81.

Belongs to the plant CAR protein family. As to quaternary structure, binds to PYR/PYL/RCAR abscisic acid intracellular receptors in an ABA-independent manner, both at the plasma membrane and in the nucleus.

It is found in the cell membrane. Its subcellular location is the nucleus. In terms of biological role, stimulates the GTPase/ATPase activities of Obg-like ATPases. Mediates the transient calcium-dependent interaction of PYR/PYL/RCAR abscisic acid (ABA) receptors with the plasma membrane and thus regulates ABA sensitivity. In Arabidopsis thaliana (Mouse-ear cress), this protein is Protein C2-DOMAIN ABA-RELATED 8.